The sequence spans 169 residues: Lipoprotein signal peptidase (169 aa).

The next 4 helical transmembrane spans lie at Trp15–Asn35, Ile47–Ser67, Trp75–Leu95, and Ala107–Val127. Residues Asp128 and Asp146 contribute to the active site. A helical transmembrane segment spans residues Ala141 to Phe161.

It belongs to the peptidase A8 family.

Its subcellular location is the cell inner membrane. The catalysed reaction is Release of signal peptides from bacterial membrane prolipoproteins. Hydrolyzes -Xaa-Yaa-Zaa-|-(S,diacylglyceryl)Cys-, in which Xaa is hydrophobic (preferably Leu), and Yaa (Ala or Ser) and Zaa (Gly or Ala) have small, neutral side chains.. Its pathway is protein modification; lipoprotein biosynthesis (signal peptide cleavage). In terms of biological role, this protein specifically catalyzes the removal of signal peptides from prolipoproteins. The protein is Lipoprotein signal peptidase of Vibrio parahaemolyticus serotype O3:K6 (strain RIMD 2210633).